Reading from the N-terminus, the 273-residue chain is Imidazole glycerol phosphate synthase subunit HisF (273 aa).

Catalysis depends on residues Asp12 and Asp136.

Belongs to the HisA/HisF family. In terms of assembly, heterodimer of HisH and HisF.

The protein resides in the cytoplasm. The catalysed reaction is 5-[(5-phospho-1-deoxy-D-ribulos-1-ylimino)methylamino]-1-(5-phospho-beta-D-ribosyl)imidazole-4-carboxamide + L-glutamine = D-erythro-1-(imidazol-4-yl)glycerol 3-phosphate + 5-amino-1-(5-phospho-beta-D-ribosyl)imidazole-4-carboxamide + L-glutamate + H(+). It participates in amino-acid biosynthesis; L-histidine biosynthesis; L-histidine from 5-phospho-alpha-D-ribose 1-diphosphate: step 5/9. IGPS catalyzes the conversion of PRFAR and glutamine to IGP, AICAR and glutamate. The HisF subunit catalyzes the cyclization activity that produces IGP and AICAR from PRFAR using the ammonia provided by the HisH subunit. The polypeptide is Imidazole glycerol phosphate synthase subunit HisF (Halobacterium salinarum (strain ATCC 29341 / DSM 671 / R1)).